A 484-amino-acid chain; its full sequence is MTKVELAKLRTMIPEMRRVRRIHFIGIGGAGMGGIAEVLANEGYQISGSDIANNRVTEHLASLGAEIQIGHKPENVHGASVVVVSTAIHGDNPEVMAARELRIPVVRRAEMLAELMRYRHGIAIAGTHGKTTTTSLIASVYAQAGADPTFVIGGLLNSAGTNARLGTSRYLIAEADESDASFLHLQPMVAIVTNIEADHMDTYGGDFTKLRATFLEFLHNLPFYGLAVVCIDDPVIRELLPEIGRATITYGYSEDADVQVQEFVQEGSQSQFRLRLQDGSFLPLRLNLPGRHNALNAAATVAVALEDHIPTDAIVDALAQFAGVGRRFQQYGEFDTGAGKVLLVDDYGHHPTEVRATLAATRAAWPERRLVLVFQPHRYTRTRDLYDDFAEVLAKVDVLIMLDVYAAGEDPIPGADGRSLCRSIRQRGTLDPIFVATPAEVPGVLADVLKDGDVVLTQGAGNVGQLSRKLAELKLSINAMKTAI.

An ATP-binding site is contributed by 126 to 132 (GTHGKTT).

This sequence belongs to the MurCDEF family.

The protein resides in the cytoplasm. The enzyme catalyses UDP-N-acetyl-alpha-D-muramate + L-alanine + ATP = UDP-N-acetyl-alpha-D-muramoyl-L-alanine + ADP + phosphate + H(+). The protein operates within cell wall biogenesis; peptidoglycan biosynthesis. Functionally, cell wall formation. The polypeptide is UDP-N-acetylmuramate--L-alanine ligase (Tolumonas auensis (strain DSM 9187 / NBRC 110442 / TA 4)).